Reading from the N-terminus, the 120-residue chain is Putative iron-sulfur cluster insertion protein ErpA (120 aa).

Iron-sulfur cluster-binding residues include Cys-49, Cys-113, and Cys-115.

It belongs to the HesB/IscA family. In terms of assembly, homodimer. It depends on iron-sulfur cluster as a cofactor.

In terms of biological role, required for insertion of 4Fe-4S clusters. This is Putative iron-sulfur cluster insertion protein ErpA from Albidiferax ferrireducens (strain ATCC BAA-621 / DSM 15236 / T118) (Rhodoferax ferrireducens).